Consider the following 283-residue polypeptide: Putative aquaporin NIP4-1 (283 aa).

At M1 the chain carries N-acetylmethionine. The next 2 membrane-spanning stretches (helical) occupy residues L45–V65 and G70–I90. An NPA 1 motif is present at residues N102–A104. The next 3 membrane-spanning stretches (helical) occupy residues L122–F142, A161–T181, and L189–S209. The short motif at N214–A216 is the NPA 2 element. A helical membrane pass occupies residues I231–L251. A Phosphoserine modification is found at S267.

It belongs to the MIP/aquaporin (TC 1.A.8) family. NIP (TC 1.A.8.12) subfamily.

The protein localises to the membrane. Its function is as follows. Potential aquaporin, which may facilitate the transport of water and small neutral solutes across cell membranes. This chain is Putative aquaporin NIP4-1 (NIP4-1), found in Arabidopsis thaliana (Mouse-ear cress).